We begin with the raw amino-acid sequence, 424 residues long: WD-40 repeat-containing protein MSI3 (424 aa).

At Met1 the chain carries N-acetylmethionine. 5 WD repeats span residues 167–207 (GHEQ…TDKV), 216–256 (GHQS…MQHQ), 259–299 (VHER…APLH), 303–343 (KHEG…DEQL), and 362–402 (GHKA…YRED). Positions 233–249 (IFGSAGDDCQLVIWDLR) match the DWD box motif. The interval 394–424 (MAESIYREDDEDEDDDDEGNQNAQHSNENQK) is disordered. The segment covering 401–412 (EDDEDEDDDDEG) has biased composition (acidic residues). The span at 413–424 (NQNAQHSNENQK) shows a compositional bias: polar residues.

It belongs to the WD repeat RBAP46/RBAP48/MSI1 family.

The protein localises to the nucleus. Functionally, core histone-binding subunit that may target chromatin assembly factors, chromatin remodeling factors and histone deacetylases to their histone substrates in a manner that is regulated by nucleosomal DNA. In Arabidopsis thaliana (Mouse-ear cress), this protein is WD-40 repeat-containing protein MSI3 (MSI3).